Here is a 127-residue protein sequence, read N- to C-terminus: Nitrogenase-stabilizing/protective protein NifW (127 aa).

This sequence belongs to the NifW family. Homotrimer; associates with NifD.

Functionally, may protect the nitrogenase Fe-Mo protein from oxidative damage. The polypeptide is Nitrogenase-stabilizing/protective protein NifW (Rhizobium etli (strain ATCC 51251 / DSM 11541 / JCM 21823 / NBRC 15573 / CFN 42)).